The primary structure comprises 315 residues: Porphobilinogen deaminase (315 aa).

At Cys234 the chain carries S-(dipyrrolylmethanemethyl)cysteine.

This sequence belongs to the HMBS family. Monomer. The cofactor is dipyrromethane.

The catalysed reaction is 4 porphobilinogen + H2O = hydroxymethylbilane + 4 NH4(+). Its pathway is porphyrin-containing compound metabolism; protoporphyrin-IX biosynthesis; coproporphyrinogen-III from 5-aminolevulinate: step 2/4. Tetrapolymerization of the monopyrrole PBG into the hydroxymethylbilane pre-uroporphyrinogen in several discrete steps. The chain is Porphobilinogen deaminase from Mycolicibacterium paratuberculosis (strain ATCC BAA-968 / K-10) (Mycobacterium paratuberculosis).